A 2569-amino-acid polypeptide reads, in one-letter code: Highly reducing polyketide synthase pks5 (2569 aa).

A disordered region spans residues 1–25 (MVVKFANGVRNRGNGDEGQRGTQRP). Positions 27–452 (STPIAIVGMS…GTNVHVIMEA (426 aa)) constitute a Ketosynthase family 3 (KS3) domain. Residues Cys200, His335, and His375 each act as for beta-ketoacyl synthase activity in the active site. The segment at 572–892 (IFNGQGAQWY…PYLSCLRRNI (321 aa)) is malonyl-CoA:ACP transacylase (MAT) domain. The N-terminal hotdog fold stretch occupies residues 960-1097 (HELLGSSVPG…GYVSAEDSSK (138 aa)). The tract at residues 960-1268 (HELLGSSVPG…LRLQKIQAED (309 aa)) is dehydratase (DH) domain. One can recognise a PKS/mFAS DH domain in the interval 960-1270 (HELLGSSVPG…LQKIQAEDDN (311 aa)). His992 acts as the Proton acceptor; for dehydratase activity in catalysis. The tract at residues 1117-1270 (RVRHVRPDAM…LQKIQAEDDN (154 aa)) is C-terminal hotdog fold. Catalysis depends on Asp1179, which acts as the Proton donor; for dehydratase activity. Residues 1457 to 1567 (LEVGAGTGGA…RKLLKPKGKL (111 aa)) are methyltransferase (CMet) domain. Residues 1855 to 2170 (DLLNKIEFLE…SGTHMGKIVL (316 aa)) form an enoyl reductase (ER) domain region. Residues 2195 to 2371 (THLIVGGLRG…AISINLGPVD (177 aa)) are ketoreductase (KR) domain. One can recognise a Carrier domain in the interval 2485-2562 (AARKLVSELI…DFAALVASRS (78 aa)). Ser2522 is modified (O-(pantetheine 4'-phosphoryl)serine).

In terms of biological role, highly reducing polyketide synthase; part of the gene cluster that mediates the biosynthesis of abscisic acid (ABA), a phytohormone that acts antagonistically toward salicylic acid (SA), jasmonic acid (JA) and ethylene (ETH) signaling, to impede plant defense responses. The first step of the pathway catalyzes the reaction from farnesyl diphosphate to alpha-ionylideneethane performed by the alpha-ionylideneethane synthase abl3 via a three-step reaction mechanism involving 2 neutral intermediates, beta-farnesene and allofarnesene. The cytochrome P450 monooxygenase abl1 might then be involved in the conversion of alpha-ionylideneethane to alpha-ionylideneacetic acid. Alpha-ionylideneacetic acid is further converted to abscisic acid in 2 steps involving the cytochrome P450 monooxygenase abl2 and the short-chain dehydrogenase/reductase abl4, via the intermediates 1'-deoxy-ABA or 1',4'-trans-diol-ABA, depending on the order of action of these 2 enzymes. Abl2 is responsible for the hydroxylation of carbon atom C-1' and abl4 might be involved in the oxidation of the C-4' carbon atom. Pks5 is clearly not involved in the production of ABA. Nonetheless, the possibility cannot be excluded that pks5 may modify ABA into another compound. It also cannot be excluded the possibility that pks5 also has a function completely independent of ABA synthesis. Pks5 is not required for pathogenicity on B.napus cotyledon. In Leptosphaeria maculans (strain JN3 / isolate v23.1.3 / race Av1-4-5-6-7-8) (Blackleg fungus), this protein is Highly reducing polyketide synthase pks5.